Here is an 874-residue protein sequence, read N- to C-terminus: Probable inorganic carbon transporter subunit DabA (874 aa).

Zn(2+) contacts are provided by C398, D400, H580, and C595.

This sequence belongs to the inorganic carbon transporter (TC 9.A.2) DabA family. In terms of assembly, forms a complex with DabB. Zn(2+) serves as cofactor.

It is found in the cell membrane. Part of an energy-coupled inorganic carbon pump. This is Probable inorganic carbon transporter subunit DabA from Bacillus thuringiensis subsp. konkukian (strain 97-27).